A 239-amino-acid polypeptide reads, in one-letter code: Lactate utilization protein A (239 aa).

This sequence belongs to the LutA/YkgE family.

Functionally, is involved in L-lactate degradation and allows cells to grow with lactate as the sole carbon source. The polypeptide is Lactate utilization protein A (Geobacillus thermodenitrificans (strain NG80-2)).